Here is a 557-residue protein sequence, read N- to C-terminus: Urocanate hydratase (557 aa).

A disordered region spans residues 1–20 (MSNPRHNEREVRSPRGDELN). NAD(+)-binding positions include 52 to 53 (GG), Gln-130, 176 to 178 (GMG), Glu-196, Arg-201, 242 to 243 (NA), 263 to 267 (QTSAH), 273 to 274 (YL), and Tyr-322. The active site involves Cys-410. NAD(+) is bound at residue Gly-492.

This sequence belongs to the urocanase family. The cofactor is NAD(+).

The protein localises to the cytoplasm. It carries out the reaction 4-imidazolone-5-propanoate = trans-urocanate + H2O. It functions in the pathway amino-acid degradation; L-histidine degradation into L-glutamate; N-formimidoyl-L-glutamate from L-histidine: step 2/3. Functionally, catalyzes the conversion of urocanate to 4-imidazolone-5-propionate. This is Urocanate hydratase from Brucella melitensis biotype 1 (strain ATCC 23456 / CCUG 17765 / NCTC 10094 / 16M).